A 584-amino-acid polypeptide reads, in one-letter code: Sulfite reductase [NADPH] hemoprotein beta-component (584 aa).

Positions 447, 453, 492, and 496 each coordinate [4Fe-4S] cluster. C496 provides a ligand contact to siroheme.

This sequence belongs to the nitrite and sulfite reductase 4Fe-4S domain family. In terms of assembly, alpha(8)-beta(8). The alpha component is a flavoprotein, the beta component is a hemoprotein. The cofactor is siroheme. Requires [4Fe-4S] cluster as cofactor.

The catalysed reaction is hydrogen sulfide + 3 NADP(+) + 3 H2O = sulfite + 3 NADPH + 4 H(+). The protein operates within sulfur metabolism; hydrogen sulfide biosynthesis; hydrogen sulfide from sulfite (NADPH route): step 1/1. In terms of biological role, component of the sulfite reductase complex that catalyzes the 6-electron reduction of sulfite to sulfide. This is one of several activities required for the biosynthesis of L-cysteine from sulfate. This chain is Sulfite reductase [NADPH] hemoprotein beta-component, found in Colwellia psychrerythraea (strain 34H / ATCC BAA-681) (Vibrio psychroerythus).